A 717-amino-acid polypeptide reads, in one-letter code: Pre-mRNA-splicing factor ATP-dependent RNA helicase DEAH10 (717 aa).

Residues methionine 1–serine 29 form a disordered region. Residues phenylalanine 12 to serine 29 show a composition bias toward polar residues. The Helicase ATP-binding domain maps to valine 51–glutamine 256. Glycine 64 to threonine 71 serves as a coordination point for ATP. The DEAH box signature appears at aspartate 162 to histidine 165. The Helicase C-terminal domain maps to threonine 278–glycine 453.

The protein belongs to the DEAD box helicase family. DEAH subfamily. PRP22 sub-subfamily. In terms of tissue distribution, widely expressed but spatially and temporally regulated during development.

It is found in the nucleus. It localises to the nucleolus. The catalysed reaction is ATP + H2O = ADP + phosphate + H(+). In terms of biological role, involved in pre-mRNA splicing. Plays a role during development in processes such as meristem maintenance, leaf morphogenesis and root morphogenesis. The protein is Pre-mRNA-splicing factor ATP-dependent RNA helicase DEAH10 of Arabidopsis thaliana (Mouse-ear cress).